The primary structure comprises 276 residues: Octanoyltransferase LipM (276 aa).

In terms of domain architecture, BPL/LPL catalytic spans 32-247 (GALPPVIRFY…GFEKGLDIKL (216 aa)). The Acyl-thioester intermediate role is filled by cysteine 149.

Belongs to the octanoyltransferase LipM family. As to quaternary structure, monomer.

It catalyses the reaction octanoyl-[ACP] + L-lysyl-[protein] = N(6)-octanoyl-L-lysyl-[protein] + holo-[ACP] + H(+). The protein operates within protein modification; protein lipoylation via endogenous pathway; protein N(6)-(lipoyl)lysine from octanoyl-[acyl-carrier-protein]. Functionally, catalyzes the transfer of endogenously produced octanoic acid from octanoyl-acyl-carrier-protein onto the lipoyl domain of GcvH, an intermediate carrier during protein lipoylation. The chain is Octanoyltransferase LipM from Macrococcus caseolyticus (strain JCSC5402) (Macrococcoides caseolyticum).